Reading from the N-terminus, the 155-residue chain is Large ribosomal subunit protein uL30 (155 aa).

Belongs to the universal ribosomal protein uL30 family. Part of the 50S ribosomal subunit.

The chain is Large ribosomal subunit protein uL30 from Pyrococcus horikoshii (strain ATCC 700860 / DSM 12428 / JCM 9974 / NBRC 100139 / OT-3).